Reading from the N-terminus, the 249-residue chain is Formylaminopyrimidine import ATP-binding protein ThiZ (249 aa).

Residues Leu6–Met228 form the ABC transporter domain. Ala39–Ser46 serves as a coordination point for ATP.

It belongs to the ABC transporter superfamily. The complex is likely composed of an ATP-binding protein (ThiZ), a transmembrane protein (ThiX) and a solute-binding protein (ThiY).

It is found in the cell membrane. It functions in the pathway cofactor biosynthesis; thiamine diphosphate biosynthesis. Participates in a thiamine pyrimidine salvage pathway as part of the ABC transporter complex ThiXYZ involved in the import of thiamine degradation products such as the formylaminopyrimidine N-formyl-4-amino-5-aminomethyl-2-methylpyrimidine (FAMP). Is likely responsible for energy coupling to the transport system. This is Formylaminopyrimidine import ATP-binding protein ThiZ from Halalkalibacterium halodurans (strain ATCC BAA-125 / DSM 18197 / FERM 7344 / JCM 9153 / C-125) (Bacillus halodurans).